Here is a 266-residue protein sequence, read N- to C-terminus: Signal peptidase I (266 aa).

Topologically, residues 1–20 (MQTDNTKSNTNKTAKQEWGS) are cytoplasmic. The helical transmembrane segment at 21–41 (FAFVICIALLIRILIMEPFTV) threads the bilayer. The Periplasmic segment spans residues 42 to 266 (PTGSMKATIL…IFRNLYNTDA (225 aa)). Active-site residues include serine 45 and lysine 108.

The protein belongs to the peptidase S26 family.

It is found in the cell inner membrane. The enzyme catalyses Cleavage of hydrophobic, N-terminal signal or leader sequences from secreted and periplasmic proteins.. Complements E.coli mutants temperature-sensitive for LepB function. This Rickettsia rickettsii (strain Sheila Smith) protein is Signal peptidase I (lepB).